The sequence spans 1837 residues: MHDSSWTEADILGVCSFLDIPKTKIDPLLQVDAFTSILIPLISKSKDYESIKNDRIVTEVNYEQQLRNSEKKLLQSNERYDLLEDERKLLENELSQIKEYLREKSSSYDTVLHDCSSLKSVNEALKQAQDQNLKQTAQLQNLLSDKEKEVEKKITIIKDLKDALASSTHQVLELQHTQQEKASLQTNYEFELQKLTQKNSILENNNTWLSRELQGVNDKLLSLHQEASLEKSQLSSQLSDAVLEKDALQRKVSSLSQQFTESNLRYQNIVAELSEMRKQYEFSQVSFEKEISSQKQISELWMEKCEDCSLRLKELQNSNGELEKLLEAAQSSFEEQLESHKEAEASLKSQINFLEKEVSSLESQLKLANERLRHYDEIEISDMSELKYSNLLNNSMKGFKGQSSVSDLYSERLYYKQKYEQTCQEVERLQRSYNHVMEEANLQHPLVKEQFKRFAHMQREIVAMSEQYQKSLEDCQKAKSRYEQLETLFKDKCTENKHYEQETKDLARQVQVLLHELDLCENGIVLGVDSRKKINSYVEKSLTEDETDTDQIISSRLVVFRNIRELQQQNQNLLSAVHELADRMEKDEKPDLDGAEIQEETLIKANETIDQLTKMLEEVSDQLRYSLKERDFFRSLVQENEKLLDMAPATPNSKLNTNLIEQTSYQRSLIRLEQLTNELESLKSISRNKEKKFEEAISSLQLEKSNIQLQLTSLTSERSLALEKLNDLEKSLVLSERSKDELDESYKSLQEQLASKKIEVQNVSSQLSICNSQLEQSNHIVDNLKSENLLLTSVKDKLKADLSNLESKLSSLQQDNFHMKAQIESSNQEYTATVDSMNSRILELSNDLRVANSKLSECSDDVRRLTLQNSFDLREHQTLVLQLQSNITELKQDITLQRTVRNQLEIQTTELKERLKFMEERQENLQSKLIAANKDTTQNPDNVEVEAISIELERTKEKLRMAELEKSNIQQKYLASEKTLEMMNETHEQFKHLVESEISTREEKITSLRSELLDLNKRVEVLKEEKESSSKELAKQLEDAVREKDSALSFKKDYEKIRSDADRVITSLKEDIEKERSLMKECHSNYESEIVSHGRTTQKLRDLRTEFDEVNTKYLKLKANFEQQHSGLSGAEKDWNIQRKAMEDEISSLKDYILGLENQNKLLHSQFDSLSQQITVLQQNSSENLNISANLEAVQDNDLRELVSYLRHEKEIMDNKYELTILDNRGLNQQVKSLQSTVDSLQLELNRLQSLPVSNDQTDTPIISGSQEVQLLYESNSVLRKDNDAKLGKIQELEKEVEKLNASLNPLQTEINELKAEIGAKTASLNLMKEYNSRWKLRFQSVLNKYERVDPTQLEELKKNCEALEKEKQELETKLQETAKETDTFKQQVNSLNEEVENLKKEVEQANTKNTRLAAAWNEKCENLKKSSLTRFAHLKQELTNKNKELTSKNAENEAMQKEIESLKDSNHQLQESASSDAEQITKEQFEQLKSEKERTEKELADSKNELEHLQSEAVDADGKTEISNLEKEIHELRSDKEGLVQQVQNLSAELAALREHSPTQGSLENADEIARLRSQLESTKQYYEKEKETEILAARSELVAEKEKTKEELENQLNEKSQRIKELEEQAQKNSSENTHDNIDDMIKQQVEEKLKENSANFDVKLKKVVAETEFRSKAKISVYEKKTRDLQNKITQLEETIENLNKQLSNPEKTDESTSSVTETKPVTSKPTASKADVGQNATEASSAKREPSGKSLSARLQGTGKQKGVQRPAVSRPVPMKPDSGKLSITGASKRIATSKNAAQNAKELSSTAKSGSLKRQRDDANKGGSSSNQKKAK.

Coiled-coil stretches lie at residues 59 to 378, 415 to 519, and 559 to 625; these read EVNY…YDEI, YKQK…ELDL, and VFRN…QLRY. A Phosphothreonine modification is found at Thr650. Coiled coils occupy residues 661–1163, 1222–1637, and 1675–1712; these read EQTS…NKLL, LDNR…ENTH, and KAKI…PEKT. The interval 1464 to 1521 is disordered; sequence KDSNHQLQESASSDAEQITKEQFEQLKSEKERTEKELADSKNELEHLQSEAVDADGKT. The segment covering 1468-1479 has biased composition (polar residues); that stretch reads HQLQESASSDAE. A compositionally biased stretch (basic and acidic residues) spans 1480–1521; the sequence is QITKEQFEQLKSEKERTEKELADSKNELEHLQSEAVDADGKT. Ser1558 bears the Phosphoserine mark. Thr1560 carries the post-translational modification Phosphothreonine. At Ser1563 the chain carries Phosphoserine. 2 disordered regions span residues 1602-1642 and 1700-1837; these read EKEK…NIDD and ENLN…KKAK. Positions 1617 to 1628 are enriched in basic and acidic residues; sequence KSQRIKELEEQA. Composition is skewed to polar residues over residues 1700–1730, 1753–1763, 1795–1814, and 1827–1837; these read ENLN…SKPT, KSLSARLQGTG, IATS…TAKS, and GGSSSNQKKAK.

Its subcellular location is the cytoplasm. The protein resides in the nucleus. Its function is as follows. Functions as a component of the nuclear pore complex (NPC). NPC components, collectively referred to as nucleoporins (NUPs), can play the role of both NPC structural components and of docking or interaction partners for transiently associated nuclear transport factors. Active directional transport is assured by both, a Phe-Gly (FG) repeat affinity gradient for these transport factors across the NPC and a transport cofactor concentration gradient across the nuclear envelope. This is Nucleoporin nup211 (nup211) from Schizosaccharomyces pombe (strain 972 / ATCC 24843) (Fission yeast).